The sequence spans 232 residues: Large ribosomal subunit protein uL1 (232 aa).

This sequence belongs to the universal ribosomal protein uL1 family. In terms of assembly, part of the 50S ribosomal subunit.

Its function is as follows. Binds directly to 23S rRNA. The L1 stalk is quite mobile in the ribosome, and is involved in E site tRNA release. Protein L1 is also a translational repressor protein, it controls the translation of the L11 operon by binding to its mRNA. This Marinobacter nauticus (strain ATCC 700491 / DSM 11845 / VT8) (Marinobacter aquaeolei) protein is Large ribosomal subunit protein uL1.